An 872-amino-acid chain; its full sequence is Eukaryotic translation initiation factor 3 subunit C (872 aa).

Residues 1–100 (MSRFFRGGDD…KVKSAKDKRF (100 aa)) form a disordered region. 2 stretches are compositionally biased toward acidic residues: residues 16–59 (SSEE…DEEE) and 72–87 (SDDESEEEEEEQSDDE). A compositionally biased stretch (basic and acidic residues) spans 88–100 (ATTKVKSAKDKRF). A PCI domain is found at 613–787 (FHMHINLELL…ETVIFRKGVE (175 aa)). Residues 812-872 (TLEQKTQGSA…GGALGNAVRG (61 aa)) form a disordered region. The span at 831-848 (GGGQRGGGQRGGRGGART) shows a compositional bias: gly residues.

Belongs to the eIF-3 subunit C family. Component of the eukaryotic translation initiation factor 3 (eIF-3) complex.

The protein localises to the cytoplasm. In terms of biological role, component of the eukaryotic translation initiation factor 3 (eIF-3) complex, which is involved in protein synthesis of a specialized repertoire of mRNAs and, together with other initiation factors, stimulates binding of mRNA and methionyl-tRNAi to the 40S ribosome. The eIF-3 complex specifically targets and initiates translation of a subset of mRNAs involved in cell proliferation. In Neurospora crassa (strain ATCC 24698 / 74-OR23-1A / CBS 708.71 / DSM 1257 / FGSC 987), this protein is Eukaryotic translation initiation factor 3 subunit C (nip-1).